The following is a 181-amino-acid chain: Translation initiation factor IF-3, chloroplastic (181 aa).

This sequence belongs to the IF-3 family. Monomer.

It is found in the plastid. It localises to the chloroplast. IF-3 binds to the 30S ribosomal subunit and shifts the equilibrium between 70S ribosomes and their 50S and 30S subunits in favor of the free subunits, thus enhancing the availability of 30S subunits on which protein synthesis initiation begins. This chain is Translation initiation factor IF-3, chloroplastic, found in Galdieria sulphuraria (Red alga).